The primary structure comprises 171 residues: Dual specificity protein phosphatase OPG106 (171 aa).

The 149-residue stretch at 23 to 171 (SPTIMTRVTN…IIEKYVIDKN (149 aa)) folds into the Tyrosine-protein phosphatase domain. Cys110 acts as the Phosphocysteine intermediate in catalysis.

It belongs to the protein-tyrosine phosphatase family. Non-receptor class dual specificity subfamily. As to quaternary structure, homodimer.

It localises to the virion. It is found in the host cytoplasm. It catalyses the reaction O-phospho-L-tyrosyl-[protein] + H2O = L-tyrosyl-[protein] + phosphate. The catalysed reaction is O-phospho-L-seryl-[protein] + H2O = L-seryl-[protein] + phosphate. Its function is as follows. Serine/tyrosine phosphatase which down-regulates cellular antiviral response by dephosphorylating activated host STAT1 and blocking interferon (IFN)-stimulated innate immune responses. Dephosphorylates the OPG144 protein. This Homo sapiens (Human) protein is Dual specificity protein phosphatase OPG106 (OPG106).